Consider the following 345-residue polypeptide: MAKRARLRLILLAKLVSLKMSDEKEKRSLRPVAFVAVVFSTVAITSCLITFPLILHYIQTLESQVQLDLEFCQARARDMWKEMLDIETGGKKDSAKLANIVLNHRRLEKRDTLQDFWARRLHDQELRDQPVGYDNPSVGVESFNSEGGGCCTCHRGPPGPAGDGGRDGADGVDGTPGEIGPPGPPAPPGPDPHSLFPPQCPCEAPPGDGGPPGQPGPDGPPGAPGNAGEDGKPGDQGPRGPPGIPGAPGQPGRPGPPGEPGTYKTEVGPAGRAGAPGRPGPPGQPGPAGPPGENGKGGGQGPSGLPGPPGQPGQNGAPGEVGQPGDNGAPGSCDHCPPARLAPGY.

Triple-helical region regions lie at residues 156–185 (GPPG…PGPP), 207–263 (GDGG…PGTY), and 268–333 (GPAG…PGSC). The disordered stretch occupies residues 161–345 (AGDGGRDGAD…CPPARLAPGY (185 aa)). 3 stretches are compositionally biased toward pro residues: residues 179–191 (IGPP…PGPD), 198–223 (PQCP…PPGA), and 278–290 (RPGP…PAGP). Over residues 292 to 304 (GENGKGGGQGPSG) the composition is skewed to gly residues.

The protein belongs to the cuticular collagen family. As to quaternary structure, collagen polypeptide chains are complexed within the cuticle by disulfide bonds and other types of covalent cross-links.

Functionally, nematode cuticles are composed largely of collagen-like proteins. The cuticle functions both as an exoskeleton and as a barrier to protect the worm from its environment. The chain is Cuticle collagen 14 (col-14) from Caenorhabditis elegans.